A 464-amino-acid chain; its full sequence is Argininosuccinate lyase (464 aa).

The protein belongs to the lyase 1 family. Argininosuccinate lyase subfamily.

It is found in the cytoplasm. The enzyme catalyses 2-(N(omega)-L-arginino)succinate = fumarate + L-arginine. Its pathway is amino-acid biosynthesis; L-arginine biosynthesis; L-arginine from L-ornithine and carbamoyl phosphate: step 3/3. The chain is Argininosuccinate lyase from Ectopseudomonas mendocina (strain ymp) (Pseudomonas mendocina).